The chain runs to 521 residues: CD166 antigen (521 aa).

Topologically, residues 1 to 465 are extracellular; it reads GSPVFIAFRS…NREQVNHRAT (465 aa). N-linked (GlcNAc...) asparagine glycosylation is found at N33, N105, N244, N299, N395, N418, and N437. Residues 63 to 172 form the Ig-like V-type 2 domain; sequence PTIVKVFKQP…YGPSGQKTVQ (110 aa). 4 disulfide bridges follow: C95–C158, C208–C251, C292–C330, and C373–C423. 3 Ig-like C2-type domains span residues 183–266, 271–347, and 354–439; these read PTEQ…TAIT, DLSL…ESLT, and PQIK…LNVS. Residues 466-487 form a helical membrane-spanning segment; that stretch reads LIVGIVLRLLHGALVAGVVYWL. Residues 488–521 lie on the Cytoplasmic side of the membrane; it reads YVKKSKTASKHVNKDLGNLEENKKLEQNNHRTEA. The segment at 500–521 is disordered; that stretch reads NKDLGNLEENKKLEQNNHRTEA. A compositionally biased stretch (basic and acidic residues) spans 507–521; sequence EENKKLEQNNHRTEA.

As to quaternary structure, homodimer. Interacts (via extracellular domain) with CD6 (via extracellular domain). Homodimerization and interaction with CD6 involve the same region and cannot occur simultaneously. The affinity for CD6 is much higher than the affinity for self-association. Interacts (via glycosylated extracellular domain) with LGALS1 and LGALS3. Interaction with LGALS1 or LGALS3 inhibits interaction with CD6. Glycosylated.

The protein localises to the cell membrane. It is found in the cell projection. The protein resides in the axon. It localises to the dendrite. Functionally, cell adhesion molecule that mediates both heterotypic cell-cell contacts via its interaction with CD6, as well as homotypic cell-cell contacts. Promotes T-cell activation and proliferation via its interactions with CD6. Contributes to the formation and maturation of the immunological synapse via its interactions with CD6. Mediates homotypic interactions with cells that express ALCAM. Mediates attachment of dendritic cells onto endothelial cells via homotypic interaction. Inhibits endothelial cell migration and promotes endothelial tube formation via homotypic interactions. Required for normal organization of the lymph vessel network. Required for normal hematopoietic stem cell engraftment in the bone marrow. Plays a role in hematopoiesis; required for normal numbers of hematopoietic stem cells in bone marrow. Promotes in vitro osteoblast proliferation and differentiation. Promotes neurite extension, axon growth and axon guidance; axons grow preferentially on surfaces that contain ALCAM. Mediates outgrowth and pathfinding for retinal ganglion cell axons. The chain is CD166 antigen (ALCAM) from Canis lupus familiaris (Dog).